The chain runs to 339 residues: Isopentenyl-diphosphate delta-isomerase (339 aa).

Residue 7 to 8 (RK) coordinates substrate. FMN is bound by residues Ser-65, 66–68 (SMT), Ser-96, and Asn-125. A substrate-binding site is contributed by 96-98 (SQR). Gln-160 is a substrate binding site. Glu-161 contacts Mg(2+). FMN-binding positions include Lys-192, Thr-222, and 293–294 (AG).

Belongs to the IPP isomerase type 2 family. In terms of assembly, homooctamer. Dimer of tetramers. Requires FMN as cofactor. NADPH serves as cofactor. Mg(2+) is required as a cofactor.

Its subcellular location is the cytoplasm. The enzyme catalyses isopentenyl diphosphate = dimethylallyl diphosphate. Functionally, involved in the biosynthesis of isoprenoids. Catalyzes the 1,3-allylic rearrangement of the homoallylic substrate isopentenyl (IPP) to its allylic isomer, dimethylallyl diphosphate (DMAPP). This Vibrio parahaemolyticus serotype O3:K6 (strain RIMD 2210633) protein is Isopentenyl-diphosphate delta-isomerase.